The following is a 557-amino-acid chain: Formate--tetrahydrofolate ligase (557 aa).

Position 65 to 72 (65 to 72) interacts with ATP; it reads TPAGEGKT.

This sequence belongs to the formate--tetrahydrofolate ligase family.

It carries out the reaction (6S)-5,6,7,8-tetrahydrofolate + formate + ATP = (6R)-10-formyltetrahydrofolate + ADP + phosphate. It participates in one-carbon metabolism; tetrahydrofolate interconversion. In Methylorubrum extorquens (strain PA1) (Methylobacterium extorquens), this protein is Formate--tetrahydrofolate ligase.